Consider the following 158-residue polypeptide: MDKVPITIRGYAALEEELKHRQQVERPRIIQAIAEARALGDLSENAEYHAAKEAQSLNEGRVLELESLISRAEIIDVSKLSGTKVKFGATVQLIDEDTEEEKTYQIVGEPEADVRSGRVSITSPVARALIGKGVGDTVEVTTPGGGKSYEIVGIRYVG.

The protein belongs to the GreA/GreB family.

Functionally, necessary for efficient RNA polymerase transcription elongation past template-encoded arresting sites. The arresting sites in DNA have the property of trapping a certain fraction of elongating RNA polymerases that pass through, resulting in locked ternary complexes. Cleavage of the nascent transcript by cleavage factors such as GreA or GreB allows the resumption of elongation from the new 3'terminus. GreA releases sequences of 2 to 3 nucleotides. The sequence is that of Transcription elongation factor GreA from Methylobacterium sp. (strain 4-46).